A 276-amino-acid polypeptide reads, in one-letter code: Formamidopyrimidine-DNA glycosylase (276 aa).

Pro2 (schiff-base intermediate with DNA) is an active-site residue. Residue Glu3 is the Proton donor of the active site. Lys60 (proton donor; for beta-elimination activity) is an active-site residue. Residues His93 and Arg112 each contribute to the DNA site. Residues 240–274 form an FPG-type zinc finger; that stretch reads HVYGRKQQPCHHCDTAIEKTVVGGRGTHYCPNCQP. Arg264 serves as the catalytic Proton donor; for delta-elimination activity.

This sequence belongs to the FPG family. As to quaternary structure, monomer. Requires Zn(2+) as cofactor.

It carries out the reaction Hydrolysis of DNA containing ring-opened 7-methylguanine residues, releasing 2,6-diamino-4-hydroxy-5-(N-methyl)formamidopyrimidine.. The catalysed reaction is 2'-deoxyribonucleotide-(2'-deoxyribose 5'-phosphate)-2'-deoxyribonucleotide-DNA = a 3'-end 2'-deoxyribonucleotide-(2,3-dehydro-2,3-deoxyribose 5'-phosphate)-DNA + a 5'-end 5'-phospho-2'-deoxyribonucleoside-DNA + H(+). Its function is as follows. Involved in base excision repair of DNA damaged by oxidation or by mutagenic agents. Acts as a DNA glycosylase that recognizes and removes damaged bases. Has a preference for oxidized purines, such as 7,8-dihydro-8-oxoguanine (8-oxoG). Has AP (apurinic/apyrimidinic) lyase activity and introduces nicks in the DNA strand. Cleaves the DNA backbone by beta-delta elimination to generate a single-strand break at the site of the removed base with both 3'- and 5'-phosphates. The chain is Formamidopyrimidine-DNA glycosylase from Shouchella clausii (strain KSM-K16) (Alkalihalobacillus clausii).